The sequence spans 976 residues: Dolichyl-phosphooligosaccharide-protein glycotransferase 1 (976 aa).

Residues 1–21 (MVKSKVKKVEKGKEGEEKRST) are Cytoplasmic-facing. A helical transmembrane segment spans residues 22–42 (YVLLKKVLIPILVFGFAIYAF). At 43–112 (YLRHLTAGKY…KVVSLFGYNE (70 aa)) the chain is on the extracellular side. Positions 55–57 (DPD) match the DXD motif 1 motif. D57 serves as a coordination point for Mn(2+). The chain crosses the membrane as a helical span at residues 113–133 (LQAFLLWPPFVGFLGVIAVYL). Residues 134–135 (LG) lie on the Cytoplasmic side of the membrane. A helical transmembrane segment spans residues 136–156 (RKVLNEWTGLWGAVVLTVSTA). The Extracellular portion of the chain corresponds to 157–165 (NFSRTFSGN). Residues 166–186 (ARGDGPFMALFIFASVAMLYY) traverse the membrane as a helical segment. Residues R167 and D169 each coordinate Mn(2+). The short motif at 167 to 169 (RGD) is the DXD motif 2 element. Over 187 to 193 (LKESNKT) the chain is Cytoplasmic. Residues 194-214 (RKIIYGTLFVLLTVISLGAWN) form a helical membrane-spanning segment. Residue G215 is a topological domain, extracellular. The chain crosses the membrane as a helical span at residues 216–236 (SPFGLMVLLGFASLQTIILFI). Residues 237 to 247 (FGKLEELKKFV) lie on the Cytoplasmic side of the membrane. The helical transmembrane segment at 248-268 (KEFYPAYLAILAFGYALTFPG) threads the bilayer. A topological domain (extracellular) is located at residue I269. A helical transmembrane segment spans residues 270-290 (VKIGGFIRFAFEVFLGLIFLL). Topologically, residues 291–306 (VIMLYGGRYLNYSDKK) are cytoplasmic. The chain crosses the membrane as a helical span at residues 307–327 (HRFLVVTIIVLLGFGGAYAYV). The Extracellular segment spans residues 328 to 360 (GPKLFRLMGGAYQSTQVYETVQELAKTTIGDVK). Residues 347–350 (TVQE) carry the TIXE motif motif. Residues 361-381 (AYYGVESGNGLIFFLSIPGLL) form a helical membrane-spanning segment. Residues 382 to 396 (ILLTKYLYDLFKKAK) are Cytoplasmic-facing. The chain crosses the membrane as a helical span at residues 397–417 (SDNETLFALVFYTMSLYLLYL). Position 418 (A418) is a topological domain, extracellular. The chain crosses the membrane as a helical span at residues 419–439 (VRFLFLASYAVALFFGIFIGF). Residue R420 coordinates a glycophospholipid. Residues 440 to 453 (SMDVIEKMKENIGI) are Cytoplasmic-facing. A helical membrane pass occupies residues 454-474 (KAALGIVLSLMILVIPFVHAP). Topologically, residues 475 to 976 (VLARSARALK…SASAPHHSSE (502 aa)) are extracellular. An interacts with target acceptor peptide in protein substrate region spans residues 513–515 (WWD). The WWDYG motif motif lies at 513-517 (WWDYG). Y518 provides a ligand contact to a glycophospholipid. The short motif at 573–580 (DWAKFNAI) is the DK motif element.

This sequence belongs to the STT3 family. It depends on Mn(2+) as a cofactor. Mg(2+) serves as cofactor.

The protein resides in the cell membrane. The catalysed reaction is an archaeal dolichyl phosphooligosaccharide + [protein]-L-asparagine = an archaeal dolichyl phosphate + a glycoprotein with the oligosaccharide chain attached by N-beta-D-glycosyl linkage to a protein L-asparagine.. It functions in the pathway protein modification; protein glycosylation. In terms of biological role, oligosaccharyl transferase (OST) that catalyzes the initial transfer of a defined glycan (ManNAcXyl(2)GlcAMan(2)GalNAc in Pyrococcus) from the lipid carrier dolichol-monophosphate to an asparagine residue within an Asn-X-Ser/Thr consensus motif in nascent polypeptide chains, the first step in protein N-glycosylation. The sequence is that of Dolichyl-phosphooligosaccharide-protein glycotransferase 1 (aglB1) from Pyrococcus horikoshii (strain ATCC 700860 / DSM 12428 / JCM 9974 / NBRC 100139 / OT-3).